Here is a 242-residue protein sequence, read N- to C-terminus: Probable pectate lyase D (242 aa).

Positions 1–17 (MYQKSLLFSLLASSALA) are cleaved as a signal peptide. The N-linked (GlcNAc...) asparagine glycan is linked to Asn-216. The disordered stretch occupies residues 217-242 (DTGAEPEEISEGPSDACQYSEPLSSC).

The protein belongs to the polysaccharide lyase 3 family. Ca(2+) serves as cofactor.

It localises to the secreted. The catalysed reaction is Eliminative cleavage of (1-&gt;4)-alpha-D-galacturonan to give oligosaccharides with 4-deoxy-alpha-D-galact-4-enuronosyl groups at their non-reducing ends.. Its function is as follows. Pectinolytic enzyme consist of four classes of enzymes: pectin lyase, polygalacturonase, pectin methylesterase and rhamnogalacturonase. Among pectinolytic enzymes, pectin lyase is the most important in depolymerization of pectin, since it cleaves internal glycosidic bonds of highly methylated pectins. Favors pectate, the anion, over pectin, the methyl ester. The protein is Probable pectate lyase D (plyD) of Aspergillus fumigatus (strain CBS 144.89 / FGSC A1163 / CEA10) (Neosartorya fumigata).